Reading from the N-terminus, the 420-residue chain is DNA replication and repair protein RecF (420 aa).

30–37 (GRNGQGKT) lines the ATP pocket. The disordered stretch occupies residues 175-214 (RKGGFARKGGFAPLGPPEGRPEGPPEGRTGGSATSGPPSR).

It belongs to the RecF family.

The protein resides in the cytoplasm. Functionally, the RecF protein is involved in DNA metabolism; it is required for DNA replication and normal SOS inducibility. RecF binds preferentially to single-stranded, linear DNA. It also seems to bind ATP. This is DNA replication and repair protein RecF from Nocardioides sp. (strain ATCC BAA-499 / JS614).